Reading from the N-terminus, the 213-residue chain is MTDFRQDFLKFSLAQNVLKFGEFTTKAGRRSPYFFNAGLFNDGASTLQLAKFYAQSIIESGIRFDMLFGPAYKGIILAAATAMMLAEKGVNVPFAYNRKEAKDHGEGGVLVGAPLKGRVLIIDDVISAGTSVRESIKLIEAEGATPAGVAIALDRMEKGTGELSAVQEVEKQYGLPVAPIASLNDLFILLQNNPEFGQFLEPVRAYRRQYGVE.

K26 lines the 5-phospho-alpha-D-ribose 1-diphosphate pocket. An orotate-binding site is contributed by 34–35 (FF). 5-phospho-alpha-D-ribose 1-diphosphate-binding positions include 72-73 (YK), R98, K99, K102, H104, and 123-131 (DDVISAGTS). S127 and R155 together coordinate orotate.

Belongs to the purine/pyrimidine phosphoribosyltransferase family. PyrE subfamily. Homodimer. It depends on Mg(2+) as a cofactor.

The enzyme catalyses orotidine 5'-phosphate + diphosphate = orotate + 5-phospho-alpha-D-ribose 1-diphosphate. The protein operates within pyrimidine metabolism; UMP biosynthesis via de novo pathway; UMP from orotate: step 1/2. Its function is as follows. Catalyzes the transfer of a ribosyl phosphate group from 5-phosphoribose 1-diphosphate to orotate, leading to the formation of orotidine monophosphate (OMP). This chain is Orotate phosphoribosyltransferase, found in Neisseria meningitidis serogroup C (strain 053442).